Here is a 255-residue protein sequence, read N- to C-terminus: MAREENVYMAKLAEQAERYEEMVSFMEKVSTSLGTSEELTVEERNLLSVAYKNVIGARRASWRIISSIEQKEESRGNEDHVKCIQEYRSKIESELSNICDGILKLLDSCLIPSASAGDSKVFYLKMKGDYHRYLAEFKTGAERKEAAESTLSAYKAAQDIANAELAPTHPIRLGLALNFSVFYYEILNSPDRACNLAKQAFDEAIAELDTLGEESYKDSTLIMQLLRDNLTLWTSDMQDDGADEIKETKTDNEQQ.

The protein belongs to the 14-3-3 family.

This is 14-3-3-like protein B from Nicotiana tabacum (Common tobacco).